The following is a 460-amino-acid chain: Probable carboxypeptidase TRV_02791 (460 aa).

Positions 1–22 (MQKTYLWALVSLLASSLVDARS) are cleaved as a signal peptide. Asparagine 98 carries an N-linked (GlcNAc...) asparagine glycan. Position 175 (aspartate 175) interacts with Zn(2+). The active-site Proton acceptor is glutamate 207. Residue glutamate 208 participates in Zn(2+) binding. An N-linked (GlcNAc...) asparagine glycan is attached at asparagine 395.

Belongs to the peptidase M20A family. The cofactor is Zn(2+).

It is found in the secreted. The chain is Probable carboxypeptidase TRV_02791 from Trichophyton verrucosum (strain HKI 0517).